Consider the following 515-residue polypeptide: Maturase K (515 aa).

It belongs to the intron maturase 2 family. MatK subfamily.

It localises to the plastid. Its subcellular location is the chloroplast. Functionally, usually encoded in the trnK tRNA gene intron. Probably assists in splicing its own and other chloroplast group II introns. In Pinus koraiensis (Korean pine), this protein is Maturase K.